A 136-amino-acid chain; its full sequence is Small ribosomal subunit protein eS8 (136 aa).

This sequence belongs to the eukaryotic ribosomal protein eS8 family. In terms of assembly, part of the 30S ribosomal subunit.

The protein is Small ribosomal subunit protein eS8 (rps8e) of Aeropyrum pernix (strain ATCC 700893 / DSM 11879 / JCM 9820 / NBRC 100138 / K1).